The following is a 129-amino-acid chain: UPF0325 protein Spro_3794 (129 aa).

This sequence belongs to the UPF0325 family.

The protein is UPF0325 protein Spro_3794 of Serratia proteamaculans (strain 568).